A 261-amino-acid polypeptide reads, in one-letter code: Global transcriptional regulator CodY (261 aa).

A GAF domain region spans residues 1-159; the sequence is MPNLLEKTRK…ASTVVGIQLL (159 aa). The segment at residues 207-226 is a DNA-binding region (H-T-H motif); it reads ASVIADRIGITRSVIVNALR.

The protein belongs to the CodY family.

The protein resides in the cytoplasm. In terms of biological role, DNA-binding global transcriptional regulator which is involved in the adaptive response to starvation and acts by directly or indirectly controlling the expression of numerous genes in response to nutrient availability. During rapid exponential growth, CodY is highly active and represses genes whose products allow adaptation to nutrient depletion. This is Global transcriptional regulator CodY from Streptococcus agalactiae serotype Ia (strain ATCC 27591 / A909 / CDC SS700).